The primary structure comprises 328 residues: Phosphate acyltransferase (328 aa).

The protein belongs to the PlsX family. As to quaternary structure, homodimer. Probably interacts with PlsY.

It localises to the cytoplasm. It catalyses the reaction a fatty acyl-[ACP] + phosphate = an acyl phosphate + holo-[ACP]. It functions in the pathway lipid metabolism; phospholipid metabolism. Its function is as follows. Catalyzes the reversible formation of acyl-phosphate (acyl-PO(4)) from acyl-[acyl-carrier-protein] (acyl-ACP). This enzyme utilizes acyl-ACP as fatty acyl donor, but not acyl-CoA. This chain is Phosphate acyltransferase, found in Staphylococcus aureus (strain USA300).